Reading from the N-terminus, the 477-residue chain is Aspartyl/glutamyl-tRNA(Asn/Gln) amidotransferase subunit B (477 aa).

This sequence belongs to the GatB/GatE family. GatB subfamily. Heterotrimer of A, B and C subunits.

The enzyme catalyses L-glutamyl-tRNA(Gln) + L-glutamine + ATP + H2O = L-glutaminyl-tRNA(Gln) + L-glutamate + ADP + phosphate + H(+). It carries out the reaction L-aspartyl-tRNA(Asn) + L-glutamine + ATP + H2O = L-asparaginyl-tRNA(Asn) + L-glutamate + ADP + phosphate + 2 H(+). In terms of biological role, allows the formation of correctly charged Asn-tRNA(Asn) or Gln-tRNA(Gln) through the transamidation of misacylated Asp-tRNA(Asn) or Glu-tRNA(Gln) in organisms which lack either or both of asparaginyl-tRNA or glutaminyl-tRNA synthetases. The reaction takes place in the presence of glutamine and ATP through an activated phospho-Asp-tRNA(Asn) or phospho-Glu-tRNA(Gln). The sequence is that of Aspartyl/glutamyl-tRNA(Asn/Gln) amidotransferase subunit B from Streptococcus gordonii (strain Challis / ATCC 35105 / BCRC 15272 / CH1 / DL1 / V288).